The sequence spans 165 residues: E3 ubiquitin ligase complex SCF subunit sconC (165 aa).

The tract at residues 106–165 (ILAANYLDIKALLDVGCKTVANMIKGKSPEEIRKTFNIQNDFTPEEEDQIRRENEWAEDR) is interaction with the F-box domain of F-box proteins.

This sequence belongs to the SKP1 family. Component of the SCF (SKP1-CUL1-F-box protein) E3 ubiquitin ligase complexes.

Its pathway is protein modification; protein ubiquitination. Essential component of the SCF (SKP1-CUL1-F-box protein) E3 ubiquitin ligase complexes, which mediate the ubiquitination and subsequent proteasomal degradation of target proteins. Controls sulfur metabolite repression, probably by mediating the inactivation or degradation of the metR transcription factor. The protein is E3 ubiquitin ligase complex SCF subunit sconC (sconC) of Arthroderma otae (Microsporum canis).